We begin with the raw amino-acid sequence, 766 residues long: BMP/retinoic acid-inducible neural-specific protein 3 (766 aa).

Positions 1–33 (MIWRSRAGAELFSLMALWEWIALSLHCWVLAVA) are cleaved as a signal peptide. One can recognise an MACPF domain in the interval 74–264 (RYKIYREFGR…FVQAALSYIA (191 aa)). Residues Asn168, Asn337, Asn456, Asn562, Asn609, and Asn641 are each glycosylated (N-linked (GlcNAc...) asparagine).

The protein belongs to the BRINP family. Strongly expressed in oral keratinocytes compared to the weak expression in tongue squamous cell carcinoma (SCC). Expressed in endothelial and aortic smooth muscle cells. Overexpressed in gonadotropinomas compared to normal pituitarie tissues.

It localises to the secreted. It is found in the mitochondrion. Its function is as follows. Inhibits neuronal cell proliferation by negative regulation of the cell cycle transition. Promotes pituitary gonadotrope cell proliferation, migration and invasion, when overexpressed. May play a role in cell pituitary tumor development. The sequence is that of BMP/retinoic acid-inducible neural-specific protein 3 (BRINP3) from Homo sapiens (Human).